The following is a 401-amino-acid chain: Protein KlcB (401 aa).

Residues 253–311 (AARSNAKGKAGGRERDPASAETAMRCSTAKADDCKAEAGPVSPEATMPGAGEASCSTAR) are disordered.

This chain is Protein KlcB (klcB), found in Escherichia coli.